Here is a 484-residue protein sequence, read N- to C-terminus: Poly(A) polymerase alpha-B (484 aa).

A Nuclear localization signal 1 motif is present at residues 240–257 (RKQLHQLLPSHVLPKKKK). 3 disordered regions span residues 276–314 (SVDS…PVSL), 326–356 (VPQN…SSTP), and 375–484 (KPVT…RLNR). The Nuclear localization signal 2 signature appears at 392-407 (KRTSSPTNEESPKKTK). Residues 423-441 (EQNKLEPEELKEVHSEEKS) are compositionally biased toward basic and acidic residues. Residues 451-464 (SSQRSSSTDLSDIS) are compositionally biased toward low complexity.

The protein belongs to the poly(A) polymerase family. In terms of assembly, monomer.

It localises to the nucleus. The catalysed reaction is RNA(n) + ATP = RNA(n)-3'-adenine ribonucleotide + diphosphate. Its function is as follows. Polymerase that creates the 3'-poly(A) tail of mRNA's. May acquire specificity through interaction with a cleavage and polyadenylation factor (CPSF). In Xenopus laevis (African clawed frog), this protein is Poly(A) polymerase alpha-B (papola-b).